A 142-amino-acid polypeptide reads, in one-letter code: Large ribosomal subunit protein uL13 (142 aa).

Belongs to the universal ribosomal protein uL13 family. In terms of assembly, part of the 50S ribosomal subunit.

This protein is one of the early assembly proteins of the 50S ribosomal subunit, although it is not seen to bind rRNA by itself. It is important during the early stages of 50S assembly. The sequence is that of Large ribosomal subunit protein uL13 from Shigella sonnei (strain Ss046).